We begin with the raw amino-acid sequence, 831 residues long: Periplasmic nitrate reductase (831 aa).

Positions Met-1–Ala-29 form a signal peptide, tat-type signal. A 4Fe-4S Mo/W bis-MGD-type domain is found at Leu-41–Asp-97. [4Fe-4S] cluster contacts are provided by Cys-48, Cys-51, Cys-55, and Cys-83. Mo-bis(molybdopterin guanine dinucleotide)-binding positions include Lys-85, Gln-152, Asn-177, Cys-181, Trp-214–Met-221, Ser-245–His-249, Gln-264–Asp-266, Met-375, Gln-379, Asn-485, Ser-511–Asp-512, Lys-534, Asp-561, and Thr-721–Ser-730. A substrate-binding site is contributed by Trp-797. Residues Asn-805 and Lys-822 each coordinate Mo-bis(molybdopterin guanine dinucleotide).

It belongs to the prokaryotic molybdopterin-containing oxidoreductase family. NasA/NapA/NarB subfamily. In terms of assembly, component of the periplasmic nitrate reductase NapAB complex composed of NapA and NapB. It depends on [4Fe-4S] cluster as a cofactor. Mo-bis(molybdopterin guanine dinucleotide) serves as cofactor. In terms of processing, predicted to be exported by the Tat system. The position of the signal peptide cleavage has not been experimentally proven.

Its subcellular location is the periplasm. The enzyme catalyses 2 Fe(II)-[cytochrome] + nitrate + 2 H(+) = 2 Fe(III)-[cytochrome] + nitrite + H2O. In terms of biological role, catalytic subunit of the periplasmic nitrate reductase complex NapAB. Receives electrons from NapB and catalyzes the reduction of nitrate to nitrite. The polypeptide is Periplasmic nitrate reductase (Cupriavidus taiwanensis (strain DSM 17343 / BCRC 17206 / CCUG 44338 / CIP 107171 / LMG 19424 / R1) (Ralstonia taiwanensis (strain LMG 19424))).